Consider the following 206-residue polypeptide: Small ribosomal subunit protein uS4A (206 aa).

The S4 RNA-binding domain maps to 96–156 (GRLDNVVYRM…EKAKKQSRIG (61 aa)).

It belongs to the universal ribosomal protein uS4 family. Part of the 30S ribosomal subunit. Contacts protein S5. The interaction surface between S4 and S5 is involved in control of translational fidelity.

In terms of biological role, one of the primary rRNA binding proteins, it binds directly to 16S rRNA where it nucleates assembly of the body of the 30S subunit. Its function is as follows. With S5 and S12 plays an important role in translational accuracy. The polypeptide is Small ribosomal subunit protein uS4A (Psychromonas ingrahamii (strain DSM 17664 / CCUG 51855 / 37)).